Here is a 549-residue protein sequence, read N- to C-terminus: MTLASIRRGYHVIKTLLQYGLDDVLPPKMTPWYFKLARNSLFWIRNKHKGKSGGERLKLAMQELGPVYIKLGQMLSTRRDLLSDEWANELAMLQDKVPPFDGALARQAIEAELKAPIESFFDDFNETPLASASISQVHTATLKSNGKAVVLKVLRPNVEAKIQADLLLMSQTAKVIDYLLGEGNRLRPSEVIEDYRVTILGELNLKLEALNAIKLRNNFLDSDALYIPYVYEEFCYPRLMVMERIYGIPVSDIAALKAQGTNFKLLAERGVELFFTQVFRDNFFHADMHPGNIFISRDHPENPYYIGLDCGIMGTLSEVDKRYLAENFLAFFNRDYHRIAQLYIESGWVSEKTDLQAFEQAIKVVCEPMFNKPLDEISFGHVLLELFRTARHFDIVVQPQLVLLEKTLLYIEGLGRQLYPQLDLWQTAKPFLEQWMAEQVGPKAMFKKVSTKLPYWSDKLPEFPELIYDNLKLGRKLLSSQQQMLDKYLKYQQQAHKSNYLLITSAILLICGTLLFNQDATLWSPYVCLISGAALWIIGWRSRPKNRKF.

The Protein kinase domain maps to 123–501; the sequence is DFNETPLASA…QQQAHKSNYL (379 aa). ATP contacts are provided by residues 129 to 137 and K152; that span reads LASASISQV. The Proton acceptor role is filled by D287. The next 2 membrane-spanning stretches (helical) occupy residues 498–518 and 520–540; these read SNYL…LFNQ and ATLW…IIGW.

It belongs to the ABC1 family. UbiB subfamily.

It is found in the cell inner membrane. It participates in cofactor biosynthesis; ubiquinone biosynthesis [regulation]. Its function is as follows. Is probably a protein kinase regulator of UbiI activity which is involved in aerobic coenzyme Q (ubiquinone) biosynthesis. This is Probable protein kinase UbiB from Shewanella sp. (strain MR-7).